The chain runs to 167 residues: Transmembrane protein 229B (167 aa).

Over 1–14 (MASAEPLTALSRWY) the chain is Cytoplasmic. Residues 15-35 (LYAIHGYFCEVMFTAAWEFVV) traverse the membrane as a helical segment. The Extracellular portion of the chain corresponds to 36 to 40 (NLNWK). The chain crosses the membrane as a helical span at residues 41 to 61 (FPGVTSVWALFIYGTSILIVE). Residues 62 to 73 (RMYLRLRGRCPL) lie on the Cytoplasmic side of the membrane. A helical membrane pass occupies residues 74-94 (LLRCLIYTLWTYLWEFTTGFI). At 95–109 (LRQFNACPWDYSQFD) the chain is on the extracellular side. A helical transmembrane segment spans residues 110-130 (FDFMGLITLEYAVPWFCGALI). The Cytoplasmic portion of the chain corresponds to 131–167 (MEQFIIRNTLRLRFDKDAEPGEPSGALALANGHVKTD).

It belongs to the TMEM229 family.

The protein resides in the membrane. The chain is Transmembrane protein 229B (TMEM229B) from Homo sapiens (Human).